The primary structure comprises 611 residues: Chaperone protein DnaK (611 aa).

Threonine 173 carries the phosphothreonine; by autocatalysis modification. A compositionally biased stretch (low complexity) spans 579–592 (AAGQAEGAQGAQDA). Residues 579–611 (AAGQAEGAQGAQDAGAKKDNVVDAEFEEVKEDK) form a disordered region. The segment covering 600–611 (VDAEFEEVKEDK) has biased composition (acidic residues).

Belongs to the heat shock protein 70 family.

In terms of biological role, acts as a chaperone. In Bacillus mycoides (strain KBAB4) (Bacillus weihenstephanensis), this protein is Chaperone protein DnaK.